Consider the following 273-residue polypeptide: Trypsin-6 (273 aa).

The N-terminal stretch at 1-22 (MLSKFTAILLAVHIALFACALT) is a signal peptide. Positions 23 to 46 (QAEKRHKLTRPAFHPNAPYLAGKR) are cleaved as a propeptide — activation peptide. The 226-residue stretch at 47 to 272 (IVGGFVIDIS…VRDWIRETSG (226 aa)) folds into the Peptidase S1 domain. A disulfide bond links Cys72 and Cys88. Active-site charge relay system residues include His87 and Asp132. 2 disulfides stabilise this stretch: Cys197–Cys213 and Cys224–Cys248. The active-site Charge relay system is the Ser228.

Belongs to the peptidase S1 family. In terms of tissue distribution, expressed in the midgut. Expression levels drop a few hours after blood feeding and pick up again 28 hours later.

It is found in the secreted. It catalyses the reaction Preferential cleavage: Arg-|-Xaa, Lys-|-Xaa.. Its function is as follows. Constitutive trypsin that is expressed 2 days after emergence, coinciding with host seeking behavior of the female. The sequence is that of Trypsin-6 (TRYP6) from Anopheles gambiae (African malaria mosquito).